The primary structure comprises 527 residues: Heat shock factor protein HSF8 (527 aa).

The span at 1–13 (MEPNSSGSGKAAV) shows a compositional bias: low complexity. Disordered stretches follow at residues 1–37 (MEPNSSGSGKAAVGDGGGGGAPMLQPAPAPAPMPSAN), 130–160 (RRKPAHGHAQQQQQPHGHAQQQMQPPGHSAS), 243–275 (NESNKRIAEGSKKRRIKQDIESQDPSVTPADGQ), 300–343 (SPRL…TSGK), and 476–501 (QSPSSPDAAMDDDISNTSETKPQING). Pro residues predominate over residues 25–37 (QPAPAPAPMPSAN). The DNA-binding element occupies 39–133 (PPPFLVKTYD…LLKSISRRKP (95 aa)). The segment covering 136-157 (GHAQQQQQPHGHAQQQMQPPGH) has biased composition (low complexity). Polar residues-rich tracts occupy residues 319-328 (SPQSNASSGR) and 491-501 (NTSETKPQING).

Belongs to the HSF family. In terms of assembly, homotrimer. Exhibits temperature-dependent phosphorylation.

It is found in the nucleus. Its function is as follows. DNA-binding protein that specifically binds heat shock promoter elements (HSE) and activates transcription. The polypeptide is Heat shock factor protein HSF8 (HSF8) (Solanum peruvianum (Peruvian tomato)).